We begin with the raw amino-acid sequence, 372 residues long: MWQAEVRVDLDAIRENVSWLRSGSAAELMAVVKGDGYGHGMVPAAHAALDGGADWLGVCTLDEALTLRRAGITVPVLAWLLAPGLPLHEGVTAGIDLGVASVAQLEEMVEAGRVAGRPARLHLKIDTGLSRGGATISEWPELLDAAAKAQADGAVEVVGVWSHFVYADAPGHPTTDRQLAVFHEGLGMVEKAGLRPRYRHLANSAATLTRPDAHFDLVRPGLAVYGLSPVAGERFGLRPAMTARARVMLTKQVPAGAGVSYGHTYTTDRASNLAVIPLGYADGVPRDASNSGPVQLGGVRRTISGRVCMDQFVLDCGDDPVAPGDVATLFGTGRDGEPTADDWAEAVGTINYEIVTRFGSTRVPRCYDGERP.

Residue lysine 33 is the Proton acceptor; specific for D-alanine of the active site. Lysine 33 bears the N6-(pyridoxal phosphate)lysine mark. Arginine 131 is a binding site for substrate. The active-site Proton acceptor; specific for L-alanine is the tyrosine 261. Position 309 (methionine 309) interacts with substrate.

It belongs to the alanine racemase family. The cofactor is pyridoxal 5'-phosphate.

It catalyses the reaction L-alanine = D-alanine. It functions in the pathway amino-acid biosynthesis; D-alanine biosynthesis; D-alanine from L-alanine: step 1/1. In terms of biological role, catalyzes the interconversion of L-alanine and D-alanine. May also act on other amino acids. The sequence is that of Alanine racemase (alr) from Salinispora tropica (strain ATCC BAA-916 / DSM 44818 / JCM 13857 / NBRC 105044 / CNB-440).